The chain runs to 303 residues: NAD(+)--arginine ADP-ribosyltransferase Lart1 (303 aa).

It is found in the secreted. The enzyme catalyses L-arginyl-[protein] + NAD(+) = N(omega)-(ADP-D-ribosyl)-L-arginyl-[protein] + nicotinamide + H(+). Its function is as follows. ADP-ribosyltransferase that targets a specific class of NAD(+)-dependent glutamate dehydrogenase (GDH) enzymes found in fungi and protists, including many natural hosts of Legionella. Acts by targeting a conserved arginine residue in the NAD(+)-binding pocket of GDH, thereby blocking oxidative deamination of glutamate. Lart1 may target amoeba GDH to prevent a conserved stress response. In vitro, acts on Glud2 from the amoeba Dictyostelium discoideum (DdGluD2) and yeast Gdh2p but does not act on human or Legionella GDH homologs. This is NAD(+)--arginine ADP-ribosyltransferase Lart1 from Legionella pneumophila subsp. pneumophila (strain Philadelphia 1 / ATCC 33152 / DSM 7513).